We begin with the raw amino-acid sequence, 273 residues long: Bifunctional protein FolD (273 aa).

Residues 155-157 (GRS), serine 180, and threonine 221 each bind NADP(+).

It belongs to the tetrahydrofolate dehydrogenase/cyclohydrolase family. As to quaternary structure, homodimer.

The catalysed reaction is (6R)-5,10-methylene-5,6,7,8-tetrahydrofolate + NADP(+) = (6R)-5,10-methenyltetrahydrofolate + NADPH. It catalyses the reaction (6R)-5,10-methenyltetrahydrofolate + H2O = (6R)-10-formyltetrahydrofolate + H(+). It functions in the pathway one-carbon metabolism; tetrahydrofolate interconversion. Catalyzes the oxidation of 5,10-methylenetetrahydrofolate to 5,10-methenyltetrahydrofolate and then the hydrolysis of 5,10-methenyltetrahydrofolate to 10-formyltetrahydrofolate. In Coprothermobacter proteolyticus (strain ATCC 35245 / DSM 5265 / OCM 4 / BT), this protein is Bifunctional protein FolD.